Here is a 566-residue protein sequence, read N- to C-terminus: Putative lipase ATG15 (566 aa).

The Cytoplasmic portion of the chain corresponds to 1–17 (MGSKHKKNASKSLRAFS). Residues 18–38 (FIILSASIALVYIFNPVKLIF) traverse the membrane as a helical; Signal-anchor for type II membrane protein segment. Over 39–566 (PSSIIRFHHG…CVEWGDEEDA (528 aa)) the chain is Lumenal. N-linked (GlcNAc...) asparagine glycans are attached at residues asparagine 264 and asparagine 348. Catalysis depends on serine 366, which acts as the Charge relay system. Asparagine 483 carries an N-linked (GlcNAc...) asparagine glycan. The segment at 507–545 (DSLDDEPPLPNPLRPGKPSTTSSSQHHTSTTTTTETSRP) is disordered. Residues 522-543 (GKPSTTSSSQHHTSTTTTTETS) show a composition bias toward low complexity.

Belongs to the AB hydrolase superfamily. Lipase family. Binds to both phosphatidylinositol (PI) and phosphatidylinositol 3,5-bisphosphate (PIP2).

The protein resides in the endosome. It is found in the multivesicular body membrane. The protein localises to the prevacuolar compartment membrane. It carries out the reaction a triacylglycerol + H2O = a diacylglycerol + a fatty acid + H(+). Functionally, lipase which is essential for lysis of subvacuolar cytoplasm to vacuole targeted bodies and intravacuolar autophagic bodies. Involved in the lysis of intravacuolar multivesicular body (MVB) vesicles. The intravacuolar membrane disintegration by ATG15 is critical to life span extension. The chain is Putative lipase ATG15 (ATG15) from Meyerozyma guilliermondii (strain ATCC 6260 / CBS 566 / DSM 6381 / JCM 1539 / NBRC 10279 / NRRL Y-324) (Yeast).